We begin with the raw amino-acid sequence, 1274 residues long: Mediator of RNA polymerase II transcription subunit 14 (1274 aa).

3 disordered regions span residues 1 to 40 (MENG…KAHA), 1056 to 1142 (LVGT…LHTQ), and 1155 to 1274 (AQRQ…VVID). A compositionally biased stretch (basic and acidic residues) spans 27–37 (AKREGSPDKGK). The segment covering 1075-1085 (QDLQQGPQKTP) has biased composition (polar residues). The span at 1090–1104 (AAQAAQAAQAAQAAQ) shows a compositional bias: low complexity. The segment covering 1108 to 1119 (PQRPKQQPPTPS) has biased composition (pro residues). 3 stretches are compositionally biased toward low complexity: residues 1120-1142 (QPQQ…LHTQ), 1155-1172 (AQRQ…NNNT), and 1183-1252 (PQQR…PQGQ). The segment covering 1253-1265 (PGHGGGANGGMGG) has biased composition (gly residues).

It belongs to the Mediator complex subunit 14 family. As to quaternary structure, component of the Mediator complex.

Its subcellular location is the nucleus. Functionally, component of the Mediator complex, a coactivator involved in the regulated transcription of nearly all RNA polymerase II-dependent genes. Mediator functions as a bridge to convey information from gene-specific regulatory proteins to the basal RNA polymerase II transcription machinery. Mediator is recruited to promoters by direct interactions with regulatory proteins and serves as a scaffold for the assembly of a functional preinitiation complex with RNA polymerase II and the general transcription factors. This chain is Mediator of RNA polymerase II transcription subunit 14 (rgr1), found in Neurospora crassa (strain ATCC 24698 / 74-OR23-1A / CBS 708.71 / DSM 1257 / FGSC 987).